Here is an 880-residue protein sequence, read N- to C-terminus: Protein transport protein SEC23 A (880 aa).

Residues 1–13 (MANLPKSSVNYPG) show a composition bias toward polar residues. Residues 1 to 95 (MANLPKSSVN…PPGPPVFNTP (95 aa)) form a disordered region. Residues 20–36 (PNRPSPQPDRTPVPHSP) show a composition bias toward pro residues. The segment covering 57–70 (MSSPSMKSPSLLSP) has biased composition (low complexity). 4 residues coordinate Zn(2+): Cys-204, Cys-207, Cys-226, and Cys-229. Positions 204 to 229 (CLNCGAYSNPYSSILIGSGQWQCVIC) are zinc finger-like.

It belongs to the SEC23/SEC24 family. SEC24 subfamily. In terms of assembly, component of the coat protein complex II (COPII), composed of at least five proteins: the Sec23/24 complex, the Sec13/31 complex and Sar1. Mostly expressed in seedlings, roots, cotyledons, leaves, trichomes, leaf primordia and flowers, and, to a lower extent, in mature siliques.

Its subcellular location is the cytoplasmic vesicle. The protein resides in the COPII-coated vesicle membrane. The protein localises to the endoplasmic reticulum membrane. It is found in the membrane. Functionally, component of the coat protein complex II (COPII) which promotes the formation of transport vesicles from the endoplasmic reticulum (ER). The coat has two main functions, the physical deformation of the endoplasmic reticulum membrane into vesicles and the selection of cargo molecules. May contribute to COPII-coated vesicles formation and ER-Golgi vesicle transport. Together with SEC23D, essential for pollen wall development and exine patterning, probably by regulating endoplasmic reticulum (ER) export of lipids and proteins (e.g. sporopollenin) necessary for pollen wall formation. Also involved in plastid physiology in anther tapetal cells. This is Protein transport protein SEC23 A from Arabidopsis thaliana (Mouse-ear cress).